We begin with the raw amino-acid sequence, 257 residues long: DNA repair protein RecO (257 aa).

This sequence belongs to the RecO family.

Functionally, involved in DNA repair and RecF pathway recombination. The polypeptide is DNA repair protein RecO (Streptococcus thermophilus (strain ATCC BAA-491 / LMD-9)).